Consider the following 411-residue polypeptide: Glucose-1-phosphate adenylyltransferase (411 aa).

Residues Gly-161, 176-177, and Ser-195 contribute to the alpha-D-glucose 1-phosphate site; that span reads EK.

The protein belongs to the bacterial/plant glucose-1-phosphate adenylyltransferase family. In terms of assembly, homotetramer.

The catalysed reaction is alpha-D-glucose 1-phosphate + ATP + H(+) = ADP-alpha-D-glucose + diphosphate. It functions in the pathway glycan biosynthesis; glycogen biosynthesis. In terms of biological role, involved in the biosynthesis of ADP-glucose, a building block required for the elongation reactions to produce glycogen. Catalyzes the reaction between ATP and alpha-D-glucose 1-phosphate (G1P) to produce pyrophosphate and ADP-Glc. The chain is Glucose-1-phosphate adenylyltransferase from Anaeromyxobacter sp. (strain Fw109-5).